Here is a 140-residue protein sequence, read N- to C-terminus: Large ribosomal subunit protein uL11 (140 aa).

Belongs to the universal ribosomal protein uL11 family. In terms of assembly, part of the ribosomal stalk of the 50S ribosomal subunit. Interacts with L10 and the large rRNA to form the base of the stalk. L10 forms an elongated spine to which L12 dimers bind in a sequential fashion forming a multimeric L10(L12)X complex. Post-translationally, one or more lysine residues are methylated.

Functionally, forms part of the ribosomal stalk which helps the ribosome interact with GTP-bound translation factors. The chain is Large ribosomal subunit protein uL11 from Enterococcus faecalis (strain ATCC 700802 / V583).